The following is a 360-amino-acid chain: Phosphoserine aminotransferase (360 aa).

Position 42 (arginine 42) interacts with L-glutamate. Residues 76-77 (AS), tryptophan 102, threonine 152, aspartate 171, and glutamine 194 contribute to the pyridoxal 5'-phosphate site. Lysine 195 is subject to N6-(pyridoxal phosphate)lysine. 236–237 (NT) contacts pyridoxal 5'-phosphate.

The protein belongs to the class-V pyridoxal-phosphate-dependent aminotransferase family. SerC subfamily. In terms of assembly, homodimer. Pyridoxal 5'-phosphate serves as cofactor.

The protein localises to the cytoplasm. The enzyme catalyses O-phospho-L-serine + 2-oxoglutarate = 3-phosphooxypyruvate + L-glutamate. It catalyses the reaction 4-(phosphooxy)-L-threonine + 2-oxoglutarate = (R)-3-hydroxy-2-oxo-4-phosphooxybutanoate + L-glutamate. It functions in the pathway amino-acid biosynthesis; L-serine biosynthesis; L-serine from 3-phospho-D-glycerate: step 2/3. In terms of biological role, catalyzes the reversible conversion of 3-phosphohydroxypyruvate to phosphoserine and of 3-hydroxy-2-oxo-4-phosphonooxybutanoate to phosphohydroxythreonine. The chain is Phosphoserine aminotransferase from Geobacillus kaustophilus (strain HTA426).